Consider the following 116-residue polypeptide: T cell receptor alpha variable 38-1 (116 aa).

Residues 1 to 21 (MTRVSLLWAVVVSTCLESGMA) form the signal peptide. Positions 22–116 (QTVTQSQPEM…TAMYFCAFMK (95 aa)) constitute an Ig-like domain. Cys-43 and Cys-112 are oxidised to a cystine. Asn-78 carries N-linked (GlcNAc...) asparagine glycosylation.

As to quaternary structure, alpha-beta TR is a heterodimer composed of an alpha and beta chain; disulfide-linked. The alpha-beta TR is associated with the transmembrane signaling CD3 coreceptor proteins to form the TR-CD3 (TcR or TCR). The assembly of alpha-beta TR heterodimers with CD3 occurs in the endoplasmic reticulum where a single alpha-beta TR heterodimer associates with one CD3D-CD3E heterodimer, one CD3G-CD3E heterodimer and one CD247 homodimer forming a stable octameric structure. CD3D-CD3E and CD3G-CD3E heterodimers preferentially associate with TR alpha and TR beta chains, respectively. The association of the CD247 homodimer is the last step of TcR assembly in the endoplasmic reticulum and is required for transport to the cell surface.

The protein localises to the cell membrane. V region of the variable domain of T cell receptor (TR) alpha chain that participates in the antigen recognition. Alpha-beta T cell receptors are antigen specific receptors which are essential to the immune response and are present on the cell surface of T lymphocytes. Recognize peptide-major histocompatibility (MH) (pMH) complexes that are displayed by antigen presenting cells (APC), a prerequisite for efficient T cell adaptive immunity against pathogens. Binding of alpha-beta TR to pMH complex initiates TR-CD3 clustering on the cell surface and intracellular activation of LCK that phosphorylates the ITAM motifs of CD3G, CD3D, CD3E and CD247 enabling the recruitment of ZAP70. In turn ZAP70 phosphorylates LAT, which recruits numerous signaling molecules to form the LAT signalosome. The LAT signalosome propagates signal branching to three major signaling pathways, the calcium, the mitogen-activated protein kinase (MAPK) kinase and the nuclear factor NF-kappa-B (NF-kB) pathways, leading to the mobilization of transcription factors that are critical for gene expression and essential for T cell growth and differentiation. The T cell repertoire is generated in the thymus, by V-(D)-J rearrangement. This repertoire is then shaped by intrathymic selection events to generate a peripheral T cell pool of self-MH restricted, non-autoaggressive T cells. Post-thymic interaction of alpha-beta TR with the pMH complexes shapes TR structural and functional avidity. The polypeptide is T cell receptor alpha variable 38-1 (Homo sapiens (Human)).